Here is a 96-residue protein sequence, read N- to C-terminus: Ferredoxin (96 aa).

In terms of domain architecture, 2Fe-2S ferredoxin-type spans 4-94; that stretch reads YKVKLLTPEG…DVVIETHKEE (91 aa). C40, C45, C48, and C78 together coordinate [2Fe-2S] cluster.

Belongs to the 2Fe2S plant-type ferredoxin family. Requires [2Fe-2S] cluster as cofactor.

It localises to the plastid. The protein resides in the chloroplast. Its function is as follows. Ferredoxins are iron-sulfur proteins that transfer electrons in a wide variety of metabolic reactions. This chain is Ferredoxin, found in Panax ginseng (Korean ginseng).